The sequence spans 664 residues: Macoilin-1 (664 aa).

4 consecutive transmembrane segments (helical) span residues 28–48 (TFLY…DFVL), 75–95 (AFSV…LLFI), 120–140 (VCLP…AIRF), and 154–174 (FAAH…KSYV). The interval 206–225 (QMLQRQERETEEATSKGMSE) is disordered. Residues 210 to 219 (RQERETEEAT) are compositionally biased toward basic and acidic residues. N-linked (GlcNAc...) asparagine glycosylation is found at Asn-234, Asn-336, Asn-339, Asn-348, and Asn-655. Disordered stretches follow at residues 315 to 364 (VGAG…LAPH) and 644 to 664 (FMDT…PLKK). Positions 334-348 (SHNSTNGSVPSSSSN) are enriched in low complexity. Residues 644–658 (FMDTSPSSLDPNASV) are compositionally biased toward polar residues.

It belongs to the macoilin family.

It localises to the nucleus membrane. The protein localises to the rough endoplasmic reticulum membrane. In terms of biological role, may play a role in the regulation of neuronal activity. The chain is Macoilin-1 from Danio rerio (Zebrafish).